Consider the following 562-residue polypeptide: Calcium-dependent protein kinase 5 (562 aa).

One can recognise a Protein kinase domain in the interval 118–372 (ELDKYKLGKG…VHKIVNHKWF (255 aa)). ATP is bound by residues 124–132 (LGKGSYGNV) and lysine 147. Aspartate 238 serves as the catalytic Proton acceptor. Residues 394-402 (KFKKFHKLC) carry the J domain autoinhibitory motif motif. Residues 394–429 (KFKKFHKLCKIKKLAITCIAYQLNKKKFGKMKKTFE) are j domain. The J domain EF-hand interaction motif signature appears at 403-412 (KIKKLAITCI). 4 consecutive EF-hand domains span residues 419-453 (KKFGKMKKTFEAFDHNGDGVLTISEIFQCLKVGDN), 454-489 (EIDRDLYYLLKQLDTDGNGLIDYTEFLAACLDHSIL), 490-525 (EQDAVCRNAFKIFDANGDGIITKDELLNVLSFSNDQ), and 528-562 (FSKEIIENVIKEVDANNDGYIDYDEFYKMMSGRQS). The Ca(2+) site is built by aspartate 432, asparagine 434, aspartate 436, glutamate 443, aspartate 467, aspartate 469, asparagine 471, glutamate 478, aspartate 503, asparagine 505, aspartate 507, glutamate 514, aspartate 541, asparagine 543, aspartate 545, tyrosine 547, and glutamate 552.

This sequence belongs to the protein kinase superfamily. Ser/Thr protein kinase family. CDPK subfamily. Mg(2+) is required as a cofactor. May be palmitoylated. In terms of processing, autophosphorylated in vitro.

It localises to the cytoplasm. The protein resides in the cytoplasmic vesicle. Its subcellular location is the secretory vesicle. The protein localises to the microneme membrane. It is found in the cell membrane. It catalyses the reaction L-seryl-[protein] + ATP = O-phospho-L-seryl-[protein] + ADP + H(+). The enzyme catalyses L-threonyl-[protein] + ATP = O-phospho-L-threonyl-[protein] + ADP + H(+). Its activity is regulated as follows. Activated by calcium. Upon calcium binding to the EF-hand domains, the C-terminus of the junction domain (J domain) undergoes a conformational change which results in the dissociation of the pseudo-substrate inhibitory motif from the catalytic domain. This, in turn, may facilitate the autophosphorylation of the activation loop at Thr-278, which leads to the kinase activation. Functionally, calcium-dependent protein kinase which acts as a sensor and effector of intracellular Ca(2+) levels probably in part downstream of cGMP-activated PKG kinase. Plays a central role in host erythrocytes and hepatocytes infection cycles. During the liver stage, involved in sporozoite motility and thus in sporozoite invasion of host hepatocytes, probably together with CDPK1 and CDPK4. Involved in merosome egress from host hepatocytes, probably together with CDPK4. Required for the release of hepatic merozoites from merosomes in the host blood stream. During the asexual blood stage, required for merozoite egress from host erythrocytes by triggering microneme secretion. Phosphorylates transporter NPT1 at late schizont stage. This chain is Calcium-dependent protein kinase 5, found in Plasmodium berghei (strain Anka).